Here is a 62-residue protein sequence, read N- to C-terminus: Large ribosomal subunit protein uL29 (62 aa).

Belongs to the universal ribosomal protein uL29 family.

The sequence is that of Large ribosomal subunit protein uL29 from Laribacter hongkongensis (strain HLHK9).